The following is a 624-amino-acid chain: MTQAEKGDTENGKEKGGEKEKEQRGVKRPIVPALVPESLQEQIQSNFIIVIHPGSTTLRIGRATDTLPASIPHVIARRHKQQGQPLYKDSWLLREGLNKPESNEQRQNGLKMVDQAIWSKKMSNGTRRIPVSPEQARSYNKQMRPAILDHCSGNKWTNTSHHPECLVGEEALYVNPLDCYNIHWPIRRGQLNIHPGPGGSLTAVLADIEVIWSHAIQKYLEIPLKDLKYYRCILLIPDIYNKQHVKELVNMILMKMGFSGIVVHQESVCATYGSGLSSTCIVDVGDQKTSVCCVEDGVSHRNTRLCLAYGGSDVSRCFYWLMQRAGFPYRECQLTNKMDCLLLQHLKETFCHLDQDISGLQDHEFQIRHPDSPALLYQFRLGDEKLQAPMALFYPATFGIVGQKMTTLQHRSQGDPEDPHDEHYLLATQSKQEQSAKATADRKSASKPIGFEGDLRGQSSDLPERLHSQEVDLGSAQGDGLMAGNDSEEALTALMSRKTAISLFEGKALGPDKAILHSIDCCSSDDTKKKMYSSILVVGGGLMFHKAQEFLQHRILNKMPPSFRRIIENVDVITRPKDMDPRLIAWKGGAVLACLDTTQELWIYQREWQRFGVRMLRERAAFVW.

At Met-1 the chain carries N-acetylmethionine. Residues 1–25 (MTQAEKGDTENGKEKGGEKEKEQRG) are compositionally biased toward basic and acidic residues. The tract at residues 1-29 (MTQAEKGDTENGKEKGGEKEKEQRGVKRP) is disordered. 2 residues coordinate ATP: Ser-55 and Thr-56. At Ser-132 the chain carries Phosphoserine. 283-286 (DVGD) lines the ATP pocket. The residue at position 412 (Ser-412) is a Phosphoserine. The tract at residues 430 to 462 (SKQEQSAKATADRKSASKPIGFEGDLRGQSSDL) is disordered.

This sequence belongs to the actin family. ARP8 subfamily. Component of the chromatin remodeling INO80 complex; specifically part of a complex module associated with the DBINO domain of INO80. Exists as monomers and dimers, but the dimer is most probably the biologically relevant form required for stable interactions with histones that exploits the twofold symmetry of the nucleosome core.

The protein localises to the nucleus. It is found in the chromosome. Functionally, plays an important role in the functional organization of mitotic chromosomes. Exhibits low basal ATPase activity, and unable to polymerize. Proposed core component of the chromatin remodeling INO80 complex which is involved in transcriptional regulation, DNA replication and probably DNA repair. Required for the recruitment of INO80 (and probably the INO80 complex) to sites of DNA damage Strongly prefer nucleosomes and H3-H4 tetramers over H2A-H2B dimers, suggesting it may act as a nucleosome recognition module within the complex. The polypeptide is Actin-related protein 8 (ACTR8) (Pongo abelii (Sumatran orangutan)).